The following is a 327-amino-acid chain: Small ribosomal subunit protein uS4m (327 aa).

Residues 96-154 (SRLDMSIHRALFASSALQARQLVLHGKVHVNGKPERRAYRQLLPGDLVTVDQKSVMNCV) form the S4 RNA-binding domain. Residues 156-173 (ASSNNTPSIQDGKQTEQV) are compositionally biased toward polar residues. The tract at residues 156–199 (ASSNNTPSIQDGKQTEQVSSKDGENEKKKDNDDDLFEQTSNGKL) is disordered. Basic and acidic residues predominate over residues 174–186 (SSKDGENEKKKDN).

Belongs to the universal ribosomal protein uS4 family. In terms of assembly, component of the mitochondrial small ribosomal subunit (mt-SSU). Mature yeast 74S mitochondrial ribosomes consist of a small (37S) and a large (54S) subunit. The 37S small subunit contains a 15S ribosomal RNA (15S mt-rRNA) and at least 32 different proteins. The 54S large subunit contains a 21S rRNA (21S mt-rRNA) and at least 45 different proteins. uS3m, uS4m and uS5m form the narrow entry site of the mRNA channel.

The protein localises to the mitochondrion. In terms of biological role, component of the mitochondrial ribosome (mitoribosome), a dedicated translation machinery responsible for the synthesis of mitochondrial genome-encoded proteins, including at least some of the essential transmembrane subunits of the mitochondrial respiratory chain. The mitoribosomes are attached to the mitochondrial inner membrane and translation products are cotranslationally integrated into the membrane. In Schizosaccharomyces pombe (strain 972 / ATCC 24843) (Fission yeast), this protein is Small ribosomal subunit protein uS4m (nam9).